The chain runs to 269 residues: 3-methyl-2-oxobutanoate hydroxymethyltransferase (269 aa).

Residues Asp-48 and Asp-87 each contribute to the Mg(2+) site. 3-methyl-2-oxobutanoate-binding positions include 48–49, Asp-87, and Lys-116; that span reads DS. A Mg(2+)-binding site is contributed by Glu-118. Glu-185 acts as the Proton acceptor in catalysis.

This sequence belongs to the PanB family. As to quaternary structure, homodecamer; pentamer of dimers. Mg(2+) serves as cofactor.

The protein localises to the cytoplasm. It carries out the reaction 3-methyl-2-oxobutanoate + (6R)-5,10-methylene-5,6,7,8-tetrahydrofolate + H2O = 2-dehydropantoate + (6S)-5,6,7,8-tetrahydrofolate. Its pathway is cofactor biosynthesis; (R)-pantothenate biosynthesis; (R)-pantoate from 3-methyl-2-oxobutanoate: step 1/2. In terms of biological role, catalyzes the reversible reaction in which hydroxymethyl group from 5,10-methylenetetrahydrofolate is transferred onto alpha-ketoisovalerate to form ketopantoate. The sequence is that of 3-methyl-2-oxobutanoate hydroxymethyltransferase from Campylobacter curvus (strain 525.92).